The primary structure comprises 230 residues: Putative transcription factor bHLH107 (230 aa).

Positions 44–93 (ASLRNHKEAERKRRARINSHLNKLRKLLSCNSKTDKSTLLAKVVQRVKEL) constitute a bHLH domain.

In terms of assembly, homodimer.

It is found in the nucleus. The sequence is that of Putative transcription factor bHLH107 (BHLH107) from Arabidopsis thaliana (Mouse-ear cress).